The following is a 378-amino-acid chain: UDP-N-acetylglucosamine--N-acetylmuramyl-(pentapeptide) pyrophosphoryl-undecaprenol N-acetylglucosamine transferase (378 aa).

UDP-N-acetyl-alpha-D-glucosamine-binding positions include 14–16 (TGG), Asn-125, Arg-165, Ser-193, and Gln-293.

This sequence belongs to the glycosyltransferase 28 family. MurG subfamily.

The protein resides in the cell inner membrane. The catalysed reaction is di-trans,octa-cis-undecaprenyl diphospho-N-acetyl-alpha-D-muramoyl-L-alanyl-D-glutamyl-meso-2,6-diaminopimeloyl-D-alanyl-D-alanine + UDP-N-acetyl-alpha-D-glucosamine = di-trans,octa-cis-undecaprenyl diphospho-[N-acetyl-alpha-D-glucosaminyl-(1-&gt;4)]-N-acetyl-alpha-D-muramoyl-L-alanyl-D-glutamyl-meso-2,6-diaminopimeloyl-D-alanyl-D-alanine + UDP + H(+). Its pathway is cell wall biogenesis; peptidoglycan biosynthesis. Functionally, cell wall formation. Catalyzes the transfer of a GlcNAc subunit on undecaprenyl-pyrophosphoryl-MurNAc-pentapeptide (lipid intermediate I) to form undecaprenyl-pyrophosphoryl-MurNAc-(pentapeptide)GlcNAc (lipid intermediate II). This Bartonella bacilliformis (strain ATCC 35685 / KC583 / Herrer 020/F12,63) protein is UDP-N-acetylglucosamine--N-acetylmuramyl-(pentapeptide) pyrophosphoryl-undecaprenol N-acetylglucosamine transferase.